Here is a 631-residue protein sequence, read N- to C-terminus: NADPH oxidoreductase A (631 aa).

Residues 73–212 form the Flavodoxin-like domain; it reads ILILYGTEYG…CFDRYIDTVC (140 aa). Residues 79 to 83 and 160 to 191 each bind FMN; these read TEYGL and VLAL…KRFR. An FAD-binding FR-type domain is found at 247–480; that stretch reads KKPYSSKLLV…INNNPDFRLP (234 aa). Position 249-299 (249-299) interacts with FAD; sequence PYSSKLLVKRVLTKGDKVGIHLEFELGDSELKYVPGDALAILPDNAASEVS. 504 to 630 lines the NADP(+) pocket; sequence QERKALGHTG…KEKRYQKDVW (127 aa).

It depends on FAD as a cofactor. FMN serves as cofactor.

Probable NADPH oxidoreductase that controls development beyond the mound stage. This chain is NADPH oxidoreductase A (redA), found in Dictyostelium discoideum (Social amoeba).